A 221-amino-acid chain; its full sequence is Eukaryotic translation initiation factor 3 subunit K (221 aa).

Residues 46–207 (YDLEANLACL…NIKTKHITEK (162 aa)) enclose the PCI domain.

The protein belongs to the eIF-3 subunit K family. In terms of assembly, component of the eukaryotic translation initiation factor 3 (eIF-3) complex.

The protein resides in the cytoplasm. Component of the eukaryotic translation initiation factor 3 (eIF-3) complex, which is involved in protein synthesis of a specialized repertoire of mRNAs and, together with other initiation factors, stimulates binding of mRNA and methionyl-tRNAi to the 40S ribosome. The eIF-3 complex specifically targets and initiates translation of a subset of mRNAs involved in cell proliferation. The protein is Eukaryotic translation initiation factor 3 subunit K of Culex quinquefasciatus (Southern house mosquito).